Consider the following 367-residue polypeptide: NADH-quinone oxidoreductase subunit D (367 aa).

The protein belongs to the complex I 49 kDa subunit family. As to quaternary structure, NDH-1 is composed of 14 different subunits. Subunits NuoB, C, D, E, F, and G constitute the peripheral sector of the complex.

Its subcellular location is the cell membrane. It catalyses the reaction a quinone + NADH + 5 H(+)(in) = a quinol + NAD(+) + 4 H(+)(out). In terms of biological role, NDH-1 shuttles electrons from NADH, via FMN and iron-sulfur (Fe-S) centers, to quinones in the respiratory chain. The immediate electron acceptor for the enzyme in this species is believed to be ubiquinone. Couples the redox reaction to proton translocation (for every two electrons transferred, four hydrogen ions are translocated across the cytoplasmic membrane), and thus conserves the redox energy in a proton gradient. In Dehalococcoides mccartyi (strain CBDB1), this protein is NADH-quinone oxidoreductase subunit D.